The sequence spans 95 residues: Sec-independent protein translocase protein TatA (95 aa).

A helical transmembrane segment spans residues 1 to 21; it reads MFGRLGAPEIILILVVIILLF. Positions 44–55 are enriched in basic and acidic residues; the sequence is AKAMKSEAKADD. The tract at residues 44–95 is disordered; it reads AKAMKSEAKADDAAPADPPNPEQSAAQRTIQAAPGDVTSSRPVTEPTDTTKR.

This sequence belongs to the TatA/E family. The Tat system comprises two distinct complexes: a TatABC complex, containing multiple copies of TatA, TatB and TatC subunits, and a separate TatA complex, containing only TatA subunits. Substrates initially bind to the TatABC complex, which probably triggers association of the separate TatA complex to form the active translocon.

The protein resides in the cell membrane. In terms of biological role, part of the twin-arginine translocation (Tat) system that transports large folded proteins containing a characteristic twin-arginine motif in their signal peptide across membranes. TatA could form the protein-conducting channel of the Tat system. The polypeptide is Sec-independent protein translocase protein TatA (Streptomyces coelicolor (strain ATCC BAA-471 / A3(2) / M145)).